The primary structure comprises 85 residues: uncharacterized protein (85 aa).

The N-terminal stretch at M1–G19 is a signal peptide. C20 carries N-palmitoyl cysteine lipidation. A lipid anchor (S-diacylglycerol cysteine) is attached at C20.

It is found in the cell outer membrane. This is an uncharacterized protein from Escherichia coli (strain K12).